The chain runs to 91 residues: uncharacterized protein (91 aa).

A run of 2 helical transmembrane segments spans residues 5-27 and 47-69; these read FFKY…TNFQ and DFYH…FIFF.

The protein resides in the cell membrane. This is an uncharacterized protein from Archaeoglobus fulgidus (strain ATCC 49558 / DSM 4304 / JCM 9628 / NBRC 100126 / VC-16).